The chain runs to 203 residues: Endo-type membrane-bound lytic murein transglycosylase A (203 aa).

Positions 1–15 are cleaved as a signal peptide; sequence MKLRWFAFLIVLLAG. A lipid anchor (N-palmitoyl cysteine) is attached at Cys-16. Cys-16 carries the S-diacylglycerol cysteine lipid modification.

Belongs to the transglycosylase Slt family.

It localises to the cell outer membrane. It carries out the reaction Endolytic cleavage of the (1-&gt;4)-beta-glycosidic linkage between N-acetylmuramic acid (MurNAc) and N-acetylglucosamine (GlcNAc) residues in peptidoglycan with concomitant formation of a 1,6-anhydrobond in the MurNAc residue.. Functionally, murein-degrading enzyme. May play a role in recycling of muropeptides during cell elongation and/or cell division. Preferentially cleaves at a distance of more than two disaccharide units from the ends of the glycan chain. This is Endo-type membrane-bound lytic murein transglycosylase A from Escherichia coli (strain K12 / MC4100 / BW2952).